The sequence spans 251 residues: Aspartate/glutamate leucyltransferase (251 aa).

The protein belongs to the R-transferase family. Bpt subfamily.

The protein resides in the cytoplasm. It catalyses the reaction N-terminal L-glutamyl-[protein] + L-leucyl-tRNA(Leu) = N-terminal L-leucyl-L-glutamyl-[protein] + tRNA(Leu) + H(+). The catalysed reaction is N-terminal L-aspartyl-[protein] + L-leucyl-tRNA(Leu) = N-terminal L-leucyl-L-aspartyl-[protein] + tRNA(Leu) + H(+). Functions in the N-end rule pathway of protein degradation where it conjugates Leu from its aminoacyl-tRNA to the N-termini of proteins containing an N-terminal aspartate or glutamate. In Stenotrophomonas maltophilia (strain R551-3), this protein is Aspartate/glutamate leucyltransferase.